The chain runs to 576 residues: 5'-nucleotidase (576 aa).

Residues 1–28 (MRPAAATAPKWLLLALSALLPLWPTAKS) form the signal peptide. Residues Asp38 and His40 each coordinate Zn(2+). The cysteines at positions 53 and 59 are disulfide-linked. N-linked (GlcNAc...) asparagine glycosylation occurs at Asn55. Zn(2+)-binding residues include Asp87, Asn119, His222, and His245. N-linked (GlcNAc...) asparagine glycans are attached at residues Asn313, Asn335, and Asn349. Disulfide bonds link Cys355/Cys360 and Cys367/Cys389. Arg356 provides a ligand contact to AMP. Arg356 provides a ligand contact to IMP. 2 residues coordinate AMP: Asn392 and Arg397. IMP-binding residues include Asn392 and Arg397. Asn405 is a glycosylation site (N-linked (GlcNAc...) asparagine). Phe419 contributes to the AMP binding site. IMP is bound at residue Phe419. The cysteines at positions 478 and 481 are disulfide-linked. AMP is bound by residues Tyr502 and Asp508. Residues Tyr502 and Asp508 each contribute to the IMP site. The GPI-anchor amidated serine moiety is linked to residue Ser551. Positions 552-576 (AASHYQGSFPLIILSFWAVILVLYQ) are cleaved as a propeptide — removed in mature form.

The protein belongs to the 5'-nucleotidase family. In terms of assembly, homodimer. Zn(2+) is required as a cofactor. In terms of tissue distribution, expressed in the brain.

The protein resides in the cell membrane. It catalyses the reaction a ribonucleoside 5'-phosphate + H2O = a ribonucleoside + phosphate. The catalysed reaction is a 2'-deoxyribonucleoside 5'-phosphate + H2O = a 2'-deoxyribonucleoside + phosphate. It carries out the reaction dTMP + H2O = thymidine + phosphate. The enzyme catalyses CMP + H2O = cytidine + phosphate. It catalyses the reaction IMP + H2O = inosine + phosphate. The catalysed reaction is AMP + H2O = adenosine + phosphate. It carries out the reaction GMP + H2O = guanosine + phosphate. The enzyme catalyses UMP + H2O = uridine + phosphate. It catalyses the reaction dAMP + H2O = 2'-deoxyadenosine + phosphate. The catalysed reaction is dCMP + H2O = 2'-deoxycytidine + phosphate. Functionally, catalyzes the hydrolysis of nucleotide monophosphates, releasing inorganic phosphate and the corresponding nucleoside. AMP is the preferred substrate but can also hydrolyze CMP and GMP. Shows a preference for ribonucleotide monophosphates over their equivalent deoxyribose forms. Other substrates include IMP, UMP, dAMP, dCMP, dTMP, NAD and NMN. The chain is 5'-nucleotidase (Nt5e) from Rattus norvegicus (Rat).